We begin with the raw amino-acid sequence, 233 residues long: Small ribosomal subunit protein uS2c (233 aa).

Belongs to the universal ribosomal protein uS2 family.

The protein localises to the plastid. The protein resides in the chloroplast. The polypeptide is Small ribosomal subunit protein uS2c (rps2) (Galdieria sulphuraria (Red alga)).